Consider the following 693-residue polypeptide: Polyribonucleotide nucleotidyltransferase (693 aa).

2 residues coordinate Mg(2+): Asp-489 and Asp-495. The region spanning 556 to 615 is the KH domain; that stretch reads PQIHIMNVNPAKIKDVVGRGGSVVKGIVEKTGAQIDTSDSGEVKIFAKDKRSLDLAKSMV. Residues 625–693 enclose the S1 motif domain; sequence GQIYKGKIVK…GRVKLSLVAR (69 aa).

It belongs to the polyribonucleotide nucleotidyltransferase family. Component of the RNA degradosome, which is a multiprotein complex involved in RNA processing and mRNA degradation. Mg(2+) is required as a cofactor.

The protein localises to the cytoplasm. It catalyses the reaction RNA(n+1) + phosphate = RNA(n) + a ribonucleoside 5'-diphosphate. Functionally, involved in mRNA degradation. Catalyzes the phosphorolysis of single-stranded polyribonucleotides processively in the 3'- to 5'-direction. The polypeptide is Polyribonucleotide nucleotidyltransferase (Francisella philomiragia subsp. philomiragia (strain ATCC 25017 / CCUG 19701 / FSC 153 / O#319-036)).